Reading from the N-terminus, the 363-residue chain is 5-hydroxytryptamine receptor 1E (363 aa).

Over 1–21 the chain is Extracellular; that stretch reads MNITNCTTEASMAIRPKTITE. N-linked (GlcNAc...) asparagine glycosylation is found at asparagine 2 and asparagine 5. Residues 22–45 form a helical membrane-spanning segment; the sequence is KMLICMTLVVITTLTTLLNLAVIM. Residues 46-59 lie on the Cytoplasmic side of the membrane; the sequence is AIGTTKKLHQPANY. A helical transmembrane segment spans residues 60-84; sequence LICSLAVTDLLVAVLVMPLSIIYIV. Residues 85–92 lie on the Extracellular side of the membrane; the sequence is MDRWKLGY. A helical transmembrane segment spans residues 93 to 118; that stretch reads FLCEVWLSVDMTCCTCSILHLCVIAL. A disulfide bridge connects residues cysteine 95 and cysteine 173. Positions 102 and 106 each coordinate serotonin. The DRY motif; important for ligand-induced conformation changes signature appears at 119 to 121; it reads DRY. The Cytoplasmic segment spans residues 119–138; that stretch reads DRYWAITNAIEYARKRTAKR. A helical membrane pass occupies residues 139–157; sequence AALMILTVWTISIFISMPP. The Extracellular portion of the chain corresponds to 158 to 179; the sequence is LFWRSHRRLSPPPSQCTIQHDH. A helical transmembrane segment spans residues 180–203; sequence VIYTIYSTLGAFYIPLTLILILYY. Over 204-291 the chain is Cytoplasmic; it reads RIYHAAKSLY…SSTRERKAAR (88 aa). The chain crosses the membrane as a helical span at residues 292-316; it reads ILGLILGAFILSWLPFFIKELIVGL. The Extracellular portion of the chain corresponds to 317–322; sequence SIYTVS. A helical membrane pass occupies residues 323-345; the sequence is SEVADFLTWLGYVNSLINPLLYT. Positions 340 to 344 match the NPxxY motif; important for ligand-induced conformation changes and signaling motif; sequence NPLLY. At 346–363 the chain is on the cytoplasmic side; it reads SFNEDFKLAFKKLIRCRE.

The protein belongs to the G-protein coupled receptor 1 family.

The protein resides in the cell membrane. Functionally, G-protein coupled receptor for 5-hydroxytryptamine (serotonin). Also functions as a receptor for various alkaloids and psychoactive substances. Ligand binding causes a conformation change that triggers signaling via guanine nucleotide-binding proteins (G proteins) and modulates the activity of downstream effectors, such as adenylate cyclase. HTR1E is coupled to G(i)/G(o) G alpha proteins and mediates inhibitory neurotransmission by inhibiting adenylate cyclase activity. This is 5-hydroxytryptamine receptor 1E (HTR1E) from Pan troglodytes (Chimpanzee).